The following is a 721-amino-acid chain: Angiomotin-like 2a (721 aa).

A disordered region spans residues 35-84 (QQALRGGSSGGGAGSPRSSLESLTQEESLSPQLSARQEPQGQEHQGDFQH). The segment covering 49–68 (SPRSSLESLTQEESLSPQLS) has biased composition (low complexity). Tyr-103 carries the post-translational modification Phosphotyrosine; by FGFR1. The tract at residues 169–214 (DNIPMSSSHSYPQLSNNHSDTVVNEQSVHQPDQRGPPPEYPFMVRS) is disordered. Polar residues predominate over residues 172–198 (PMSSSHSYPQLSNNHSDTVVNEQSVHQ). Residues 275-531 (ANNFQMEQLI…TRWEQKYLEE (257 aa)) are a coiled coil. The segment covering 554-567 (INHSPRNSPNSSFN) has biased composition (polar residues). Disordered stretches follow at residues 554–575 (INHSPRNSPNSSFNEDLPSPNH) and 666–709 (DSST…TQIS). Over residues 688–702 (SAPEPSTASSSESTS) the composition is skewed to low complexity. A PDZ-binding motif is present at residues 718 to 721 (EILI).

It belongs to the angiomotin family. As to quaternary structure, interacts with SRC. Post-translationally, phosphorylation at Tyr-103 is necessary for efficient binding to SRC and synergistically functioning with SRC to activate the downstream MAPK pathway. Expressed in endothelial cells.

The protein localises to the recycling endosome. The protein resides in the cytoplasm. It localises to the cell projection. It is found in the podosome. Its subcellular location is the cell junction. Functionally, required for proper architecture of actin filaments and for cell movements during embryogenesis. Plays a role in the radial actin fiber architecture in skin epithelial cells, thereby maintains cell geometry, size and cell interconnectivity within the skin. Plays an important role in coupling actin fibers to cell junctions in endothelial cells and is therefore required for correct endothelial cell morphology and maintenance of dorsal aorta lumen expansion during embryogenesis. May further play a role in the polarity, proliferation and migration of endothelial cells, and therefore participates in angiogenesis. Inhibits the Wnt/beta-catenin signaling pathway, probably by recruiting CTNNB1 to recycling endosomes and hence preventing its translocation to the nucleus. Regulates the translocation of phosphorylated SRC to peripheral cell-matrix adhesion sites. Selectively promotes FGF-induced MAPK activation through SRC. This chain is Angiomotin-like 2a (amotl2a), found in Danio rerio (Zebrafish).